The sequence spans 502 residues: Beta-amyrin 28-monooxygenase CYP716A379 (502 aa).

A helical; Signal-anchor for type II membrane protein transmembrane segment spans residues 3–23 (LITLLSALLVLAIVSLSTFFV). N-linked (GlcNAc...) asparagine glycans are attached at residues Asn88 and Asn181. Cys444 provides a ligand contact to heme.

Belongs to the cytochrome P450 family. The cofactor is heme. As to expression, mainly expressed in flowers and flower buds, to a lesser extent in young leaves and, at low levels, in old leaves, stems and roots.

It is found in the membrane. The catalysed reaction is beta-amyrin + 3 reduced [NADPH--hemoprotein reductase] + 3 O2 = oleanolate + 3 oxidized [NADPH--hemoprotein reductase] + 4 H2O + 4 H(+). The protein operates within secondary metabolite biosynthesis; terpenoid biosynthesis. Its function is as follows. Component of the oleanane-type triterpene saponins (e.g. saponarioside A and saponarioside B) biosynthetic pathway, leading to the production of natural products with detergent properties used as traditional sources of soap. An oxidoreductase that facilitates the oxidation of the methyl group to a carboxyl group at the C-28 position of beta-amyrin, resulting in the formation of oleanolic acid. Catalyzes also the subsequent oxidation of the methyl group to a&lt; carboxyl group at the C-16 alpha position of oleanolic acid, resulting in the formation of echinocystic acid. This chain is Beta-amyrin 28-monooxygenase CYP716A379, found in Saponaria officinalis (Common soapwort).